The following is a 449-amino-acid chain: MKPFSPEVSPDPCPATAAHLLRTYTLFLTLLELAQGCRGSMVSNRPFITVWNADTHWCLKDHGVDVDVSVFDVVANKEQNFQGPNMTIFYREELGTYPYYTPTGEPVFGGLPQNASLVTHLAHAFQDIKAAMPEPDFSGLAVIDWEAWRPRWAFNWDSKDIYQQRSMELVRAEHPDWPETLVEAEAQGQFQEAAEAWMAGTLQLGQVLRPRGLWGYYGFPDCYNYDFLSPNYTGQCSLSIHDQNDQLGWLWNQSYALYPSIYLPAALMGTGKSQMYVRYRVQEAFRLALVSRDPHVPIMPYVQIFYEKTDYLLPLEELEHSLGESAAQGAAGAVLWISSEKTSTKESCQAIKAYMDSTLGPFILNVTSAALLCSEALCSGRGRCVRHPSYPEALLTLSPASFSIEPTHDGRPLSLKGTLSLKDRAQMAMKFKCRCYRGWSGEWCKKQDM.

The N-terminal stretch at 1–39 is a signal peptide; the sequence is MKPFSPEVSPDPCPATAAHLLRTYTLFLTLLELAQGCRG. Disulfide bonds link Cys58–Cys348 and Cys222–Cys236. Residues Asn85 and Asn114 are each glycosylated (N-linked (GlcNAc...) asparagine). The Proton donor role is filled by Glu146. N-linked (GlcNAc...) asparagine glycans are attached at residues Asn231, Asn252, and Asn365. Intrachain disulfides connect Cys373-Cys384, Cys378-Cys433, and Cys435-Cys444. The EGF-like domain occupies 433–444; it reads CRCYRGWSGEWC.

This sequence belongs to the glycosyl hydrolase 56 family.

Its subcellular location is the secreted. The protein localises to the lysosome. The enzyme catalyses Random hydrolysis of (1-&gt;4)-linkages between N-acetyl-beta-D-glucosamine and D-glucuronate residues in hyaluronate.. Functionally, may have a role in promoting tumor progression. May block the TGFB1-enhanced cell growth. Overexpression of HYAL1 suppressed the growth rate of colon carcinoma cell tumors in an experimental model. The protein is Hyaluronidase-1 (Hyal1) of Rattus norvegicus (Rat).